Here is a 1589-residue protein sequence, read N- to C-terminus: Centrosomal protein of 170 kDa protein B (1589 aa).

The FHA domain maps to 23–73 (IFVGREECELMLQSRSVDKQHAVINYDQDRDEHWVKDLGSLNGTFVNDMRI). Disordered stretches follow at residues 130 to 261 (RSEA…GAAP), 287 to 309 (ITKF…EMVS), 325 to 388 (LLHR…RLQR), and 409 to 583 (FDED…EVEE). Basic and acidic residues-rich tracts occupy residues 147–156 (RPEKGDRRPG) and 243–253 (PAHEMPTKDAE). The segment covering 330–344 (GPGDDRHSTKSDLPV) has biased composition (basic and acidic residues). Serine 360 and serine 421 each carry phosphoserine. 2 stretches are compositionally biased toward basic and acidic residues: residues 430 to 446 (PKAD…RDRP) and 467 to 476 (LKREKTEERL). The segment covering 478–489 (SPSPASRTPARP) has biased composition (low complexity). Phosphoserine is present on residues serine 480 and serine 492. Residues 520 to 530 (EKVPPVLPAPL) show a composition bias toward pro residues. Serine 536 carries the post-translational modification Phosphoserine. Over residues 538–548 (VGPPTPPPAPT) the composition is skewed to pro residues. At threonine 542 the chain carries Phosphothreonine. A phosphoserine mark is found at serine 597, serine 619, serine 655, serine 711, serine 721, serine 746, serine 748, serine 751, serine 753, serine 772, serine 829, serine 853, serine 954, serine 972, serine 986, and serine 988. Disordered stretches follow at residues 598-895 (PELS…LQDL), 934-1316 (DAEC…PYGF), 1350-1374 (DGDT…TPAS), and 1532-1552 (AQPG…PASA). Residues 711-722 (SPAGPESSRRSG) show a composition bias toward low complexity. Polar residues predominate over residues 957–972 (DTASTVSLRSGKSGPS). The span at 1029 to 1038 (SAIRRGHRPR) shows a compositional bias: basic residues. 3 positions are modified to phosphoserine: serine 1135, serine 1179, and serine 1199. Positions 1221–1230 (AANTATTTGP) are enriched in polar residues. The segment covering 1286–1301 (PRAGSSSRARSRAPGP) has biased composition (low complexity). A Phosphothreonine modification is found at threonine 1304. Residues serine 1356 and serine 1362 each carry the phosphoserine modification. The segment covering 1363–1374 (ASLSNMPSTPAS) has biased composition (polar residues). Residues 1542 to 1552 (AAQSPPSPASA) are compositionally biased toward low complexity. Residues serine 1545 and serine 1548 each carry the phosphoserine modification.

The protein belongs to the CEP170 family.

Its subcellular location is the cytoplasm. The protein resides in the cytoskeleton. Functionally, plays a role in microtubule organization. The protein is Centrosomal protein of 170 kDa protein B (CEP170B) of Homo sapiens (Human).